The primary structure comprises 573 residues: DNA ligase (573 aa).

E250 contributes to the ATP binding site. The active-site N6-AMP-lysine intermediate is the K252. Positions 257, 272, 301, 342, 432, and 438 each coordinate ATP.

This sequence belongs to the ATP-dependent DNA ligase family. The cofactor is Mg(2+).

It catalyses the reaction ATP + (deoxyribonucleotide)n-3'-hydroxyl + 5'-phospho-(deoxyribonucleotide)m = (deoxyribonucleotide)n+m + AMP + diphosphate.. Its function is as follows. DNA ligase that seals nicks in double-stranded DNA during DNA replication, DNA recombination and DNA repair. The chain is DNA ligase from Methanococcus maripaludis (strain C7 / ATCC BAA-1331).